The chain runs to 168 residues: Disulfide bond formation protein B 2 (168 aa).

Residues 1-9 lie on the Cytoplasmic side of the membrane; sequence MLPARLRTF. A helical transmembrane segment spans residues 10–26; it reads FLPACLVALAVLVASFR. Over 27–44 the chain is Periplasmic; sequence LENTVGLMPCPLCLSQRL. A disulfide bond links C36 and C39. The helical transmembrane segment at 45 to 61 threads the bilayer; sequence LLGGYALLCFAAVLQAP. At 62–67 the chain is on the cytoplasmic side; it reads GTRGIL. The chain crosses the membrane as a helical span at residues 68–85; it reads RYARLALGCSLAGALLAA. The Periplasmic segment spans residues 86-140; sequence RHVWLQGAEGVNEVCPVPIGRVFEQSWSEAARQLLLGGPDCRSLAWSFLDLTLPE. C100 and C126 are disulfide-bonded. Residues 141-159 form a helical membrane-spanning segment; it reads WSLLAFLLLAVLPLSCLLA. Over 160-168 the chain is Cytoplasmic; it reads YRFRTLART.

Belongs to the DsbB family.

Its subcellular location is the cell inner membrane. Required for disulfide bond formation in some periplasmic proteins. Acts by oxidizing the DsbA protein. This is Disulfide bond formation protein B 2 (dsbB2) from Pseudomonas putida (strain ATCC 47054 / DSM 6125 / CFBP 8728 / NCIMB 11950 / KT2440).